We begin with the raw amino-acid sequence, 168 residues long: Phosphopantetheine adenylyltransferase (168 aa).

Position 14 (Thr-14) interacts with substrate. ATP is bound by residues 14 to 15 and His-22; that span reads TF. Residues Lys-46, Leu-78, and Arg-92 each coordinate substrate. ATP contacts are provided by residues 93-95, Glu-103, and 128-134; these read GLR and YSFISSS.

The protein belongs to the bacterial CoaD family. In terms of assembly, homohexamer. The cofactor is Mg(2+).

It is found in the cytoplasm. The catalysed reaction is (R)-4'-phosphopantetheine + ATP + H(+) = 3'-dephospho-CoA + diphosphate. It functions in the pathway cofactor biosynthesis; coenzyme A biosynthesis; CoA from (R)-pantothenate: step 4/5. Its function is as follows. Reversibly transfers an adenylyl group from ATP to 4'-phosphopantetheine, yielding dephospho-CoA (dPCoA) and pyrophosphate. The polypeptide is Phosphopantetheine adenylyltransferase (Xanthomonas axonopodis pv. citri (strain 306)).